The chain runs to 137 residues: ATP synthase epsilon chain 1 (137 aa).

Belongs to the ATPase epsilon chain family. As to quaternary structure, F-type ATPases have 2 components, CF(1) - the catalytic core - and CF(0) - the membrane proton channel. CF(1) has five subunits: alpha(3), beta(3), gamma(1), delta(1), epsilon(1). CF(0) has three main subunits: a, b and c.

It is found in the cell inner membrane. Its function is as follows. Produces ATP from ADP in the presence of a proton gradient across the membrane. This is ATP synthase epsilon chain 1 (atpC1) from Ralstonia nicotianae (strain ATCC BAA-1114 / GMI1000) (Ralstonia solanacearum).